Consider the following 93-residue polypeptide: MLCSIYKSSKKEGTYLYIPKKDDFSQVPDTLMQMFGKPSHVMTVNLEGRSLALVNIEKVKESLNNEGFFLQLPPPPENLLQQHKERKAQQKND.

The YcgL domain maps to 1–84; the sequence is MLCSIYKSSK…PPENLLQQHK (84 aa). Positions 72–93 are disordered; that stretch reads LPPPPENLLQQHKERKAQQKND.

The chain is YcgL domain-containing protein VV1_0131 from Vibrio vulnificus (strain CMCP6).